Consider the following 316-residue polypeptide: Acetyl-coenzyme A carboxylase carboxyl transferase subunit alpha (316 aa).

Positions 40–290 (KARKELQRIY…RERFAHHLQE (251 aa)) constitute a CoA carboxyltransferase C-terminal domain.

It belongs to the AccA family. Acetyl-CoA carboxylase is a heterohexamer composed of biotin carboxyl carrier protein (AccB), biotin carboxylase (AccC) and two subunits each of ACCase subunit alpha (AccA) and ACCase subunit beta (AccD).

The protein resides in the cytoplasm. It carries out the reaction N(6)-carboxybiotinyl-L-lysyl-[protein] + acetyl-CoA = N(6)-biotinyl-L-lysyl-[protein] + malonyl-CoA. The protein operates within lipid metabolism; malonyl-CoA biosynthesis; malonyl-CoA from acetyl-CoA: step 1/1. Component of the acetyl coenzyme A carboxylase (ACC) complex. First, biotin carboxylase catalyzes the carboxylation of biotin on its carrier protein (BCCP) and then the CO(2) group is transferred by the carboxyltransferase to acetyl-CoA to form malonyl-CoA. The chain is Acetyl-coenzyme A carboxylase carboxyl transferase subunit alpha from Acidithiobacillus ferrooxidans (strain ATCC 23270 / DSM 14882 / CIP 104768 / NCIMB 8455) (Ferrobacillus ferrooxidans (strain ATCC 23270)).